Here is a 1092-residue protein sequence, read N- to C-terminus: Neural cell adhesion molecule 1-B (1092 aa).

The signal sequence occupies residues Met1–Ala19. 5 Ig-like C2-type domains span residues Leu20–Asn108, Gln113–Gln202, Pro208–Val295, Pro303–Gln397, and Pro400–Val489. The Extracellular portion of the chain corresponds to Leu20 to Thr705. 2 disulfides stabilise this stretch: Cys41-Cys93 and Cys136-Cys186. Asn82 carries an N-linked (GlcNAc...) asparagine glycan. Heparin-binding positions include Arg149 to Lys153 and Lys158 to Arg162. Asn219 carries N-linked (GlcNAc...) asparagine glycosylation. Cysteines 232 and 282 form a disulfide. N-linked (GlcNAc...) asparagine glycosylation is found at Asn310, Asn341, Asn417, Asn443, and Asn472. A disulfide bridge links Cys323 with Cys379. Cys420 and Cys473 are disulfide-bonded. Fibronectin type-III domains lie at Thr493 to Val592 and Glu595 to Pro691. Residues Gly706–Val723 traverse the membrane as a helical segment. Residues Asp724 to Ala1092 lie on the Cytoplasmic side of the membrane. A compositionally biased stretch (basic and acidic residues) spans Lys754–Asn784. Disordered stretches follow at residues Lys754–Phe1005 and Thr1024–Ala1092. 2 stretches are compositionally biased toward low complexity: residues Thr820–Thr832 and Ser839–Thr851. Polar residues predominate over residues Asp860–Pro871. The span at Pro917–Ala929 shows a compositional bias: low complexity. Residues Ala968–Glu978 are compositionally biased toward polar residues. The span at Ala1050–Val1068 shows a compositional bias: basic and acidic residues. Residues Asn1080 to Ala1092 show a composition bias toward polar residues.

Post-translationally, polysialylated by ST8SIA2 and ST8SIA4. Polysialylation modulates cell interactions by confering both attractive and repulsive properties that are highly regulated by ST8SIA2 and ST8SIA4. Polysialylation is formed on a-2,3-linked sialic acid of core glycans.

It localises to the cell membrane. This protein is a cell adhesion molecule involved in neuron-neuron adhesion, neurite fasciculation, outgrowth of neurites, etc. The protein is Neural cell adhesion molecule 1-B of Xenopus laevis (African clawed frog).